Here is a 249-residue protein sequence, read N- to C-terminus: 3-deoxy-D-manno-octulosonic acid kinase (249 aa).

Residue D175 is part of the active site.

Belongs to the protein kinase superfamily. KdkA/RfaP family.

The protein resides in the cell inner membrane. The catalysed reaction is an alpha-Kdo-(2-&gt;6)-lipid IVA + ATP = a 4-O-phospho-alpha-Kdo-(2-&gt;6)-lipid IVA + ADP + H(+). Its pathway is bacterial outer membrane biogenesis; LPS core biosynthesis. Its function is as follows. Catalyzes the ATP-dependent phosphorylation of the 3-deoxy-D-manno-octulosonic acid (Kdo) residue in Kdo-lipid IV(A) at the 4-OH position. In Xylella fastidiosa (strain M12), this protein is 3-deoxy-D-manno-octulosonic acid kinase.